Consider the following 112-residue polypeptide: Nucleoid-associated protein FTH_1374 (112 aa).

Positions 1–27 are disordered; sequence MNFDMSKLMQQAQKMQEQMKKAQQERE. Positions 17–27 are enriched in basic and acidic residues; sequence EQMKKAQQERE.

The protein belongs to the YbaB/EbfC family. In terms of assembly, homodimer.

It is found in the cytoplasm. Its subcellular location is the nucleoid. Binds to DNA and alters its conformation. May be involved in regulation of gene expression, nucleoid organization and DNA protection. This Francisella tularensis subsp. holarctica (strain OSU18) protein is Nucleoid-associated protein FTH_1374.